The following is a 103-amino-acid chain: Small ribosomal subunit protein uS14c (103 aa).

Positions Ser-27–Asn-56 are disordered.

It belongs to the universal ribosomal protein uS14 family. In terms of assembly, part of the 30S ribosomal subunit.

The protein resides in the plastid. The protein localises to the chloroplast. In terms of biological role, binds 16S rRNA, required for the assembly of 30S particles. This chain is Small ribosomal subunit protein uS14c, found in Zea mays (Maize).